The primary structure comprises 250 residues: 2,3-bisphosphoglycerate-dependent phosphoglycerate mutase (250 aa).

Residues 10–17, 23–24, arginine 62, 89–92, lysine 100, 116–117, and 185–186 contribute to the substrate site; these read RHGESQWN, TG, ERHY, RR, and GN. Histidine 11 serves as the catalytic Tele-phosphohistidine intermediate. Glutamate 89 (proton donor/acceptor) is an active-site residue.

Belongs to the phosphoglycerate mutase family. BPG-dependent PGAM subfamily. In terms of assembly, homodimer.

It catalyses the reaction (2R)-2-phosphoglycerate = (2R)-3-phosphoglycerate. It participates in carbohydrate degradation; glycolysis; pyruvate from D-glyceraldehyde 3-phosphate: step 3/5. Catalyzes the interconversion of 2-phosphoglycerate and 3-phosphoglycerate. In Klebsiella pneumoniae (strain 342), this protein is 2,3-bisphosphoglycerate-dependent phosphoglycerate mutase.